We begin with the raw amino-acid sequence, 480 residues long: Glutamyl-tRNA(Gln) amidotransferase subunit A (480 aa).

Catalysis depends on charge relay system residues K76 and S151. S175 acts as the Acyl-ester intermediate in catalysis.

The protein belongs to the amidase family. GatA subfamily. In terms of assembly, heterotrimer of A, B and C subunits.

The enzyme catalyses L-glutamyl-tRNA(Gln) + L-glutamine + ATP + H2O = L-glutaminyl-tRNA(Gln) + L-glutamate + ADP + phosphate + H(+). Allows the formation of correctly charged Gln-tRNA(Gln) through the transamidation of misacylated Glu-tRNA(Gln) in organisms which lack glutaminyl-tRNA synthetase. The reaction takes place in the presence of glutamine and ATP through an activated gamma-phospho-Glu-tRNA(Gln). The sequence is that of Glutamyl-tRNA(Gln) amidotransferase subunit A from Exiguobacterium sp. (strain ATCC BAA-1283 / AT1b).